The sequence spans 64 residues: Large ribosomal subunit protein bL32 (64 aa).

The disordered stretch occupies residues 1–35 (MAVQKSRVTPSRRGQRRSHDALTAKQLSTDPTSGE).

Belongs to the bacterial ribosomal protein bL32 family.

This chain is Large ribosomal subunit protein bL32, found in Xanthomonas axonopodis pv. citri (strain 306).